The following is a 339-amino-acid chain: 7,8-didemethyl-8-hydroxy-5-deazariboflavin synthase (339 aa).

Residues A25–N256 form the Radical SAM core domain. [4Fe-4S] cluster contacts are provided by C39, C43, and C46.

This sequence belongs to the radical SAM superfamily. CofG family. In terms of assembly, consists of two subunits, CofG and CofH. It depends on [4Fe-4S] cluster as a cofactor.

The enzyme catalyses 5-amino-5-(4-hydroxybenzyl)-6-(D-ribitylimino)-5,6-dihydrouracil + S-adenosyl-L-methionine = 7,8-didemethyl-8-hydroxy-5-deazariboflavin + 5'-deoxyadenosine + L-methionine + NH4(+) + H(+). The protein operates within cofactor biosynthesis; coenzyme F0 biosynthesis. Catalyzes the radical-mediated synthesis of 7,8-didemethyl-8-hydroxy-5-deazariboflavin from 5-amino-5-(4-hydroxybenzyl)-6-(D-ribitylimino)-5,6-dihydrouracil. The polypeptide is 7,8-didemethyl-8-hydroxy-5-deazariboflavin synthase (Nostoc sp. (strain PCC 7120 / SAG 25.82 / UTEX 2576)).